Consider the following 316-residue polypeptide: MDTIKIFNHGEFDTIRNELVNLLKVVKWNTINSNVTVSSTDTIDISDCIREILYKQFKNVRNIEVSSDISFIKYNRFNDTTLTDDNVGYYLVIYLNRTKSVKTLIYPTPETVITSSEDIMFSKSLNFRFENVKRDYKLVMCSISLTYKPSICRIQYDNNKYLDISDSQECNNICYCVITMDPHHLIDLETICVLVDKSGKCLLVNEFYIRFRKNHIYNSFADLCMDHIFELPNTKELFTLRNDDGRNIAWDNDKLESGNNTWIPKTDDEYKFLSKLMNIAKFNNTKFDYYVLVGDTDPCTVFTFKVTKYYINLNYE.

The protein belongs to the poxviridae OPG031 protein family.

The protein resides in the host cytoplasm. It is found in the host nucleus. Its function is as follows. Plays a role in the inhibition of host NF-kappa-B activation. Mechanistically, blocks the subunit p65/RELA translocation into the host nucleus. The polypeptide is Protein C4 (OPG031) (Homo sapiens (Human)).